The sequence spans 251 residues: Probable transcriptional regulatory protein BLD_0450 (251 aa).

Belongs to the TACO1 family.

Its subcellular location is the cytoplasm. This chain is Probable transcriptional regulatory protein BLD_0450, found in Bifidobacterium longum (strain DJO10A).